The sequence spans 117 residues: Large ribosomal subunit protein uL23 (117 aa).

This sequence belongs to the universal ribosomal protein uL23 family. As to quaternary structure, part of the 50S ribosomal subunit. Contacts protein L29, and trigger factor when it is bound to the ribosome.

One of the early assembly proteins it binds 23S rRNA. One of the proteins that surrounds the polypeptide exit tunnel on the outside of the ribosome. Forms the main docking site for trigger factor binding to the ribosome. This Acetivibrio thermocellus (strain ATCC 27405 / DSM 1237 / JCM 9322 / NBRC 103400 / NCIMB 10682 / NRRL B-4536 / VPI 7372) (Clostridium thermocellum) protein is Large ribosomal subunit protein uL23.